The primary structure comprises 202 residues: Matrix protein (202 aa).

The PPXY motif motif lies at 35–38 (PPEY). The interval 115–151 (KLRRTLIFQWAESHGPLEGEELEYSQEITWDDEAEFV) is essential for glycoprotein binding.

This sequence belongs to the lyssavirus matrix protein family. In terms of assembly, homomultimer. Interacts with nucleoprotein and with the cytoplasmic domain of glycoprotein.

The protein localises to the virion membrane. It is found in the host endomembrane system. Plays a major role in assembly and budding of virion. Completely covers the ribonucleoprotein coil and keep it in condensed bullet-shaped form. Inhibits viral transcription and stimulates replication. Plays a major role in early induction of TRAIL-mediated apoptosis in infected neurons. In Mokola virus (MOKV), this protein is Matrix protein (M).